The primary structure comprises 82 residues: Putative membrane protein insertion efficiency factor (82 aa).

The protein belongs to the UPF0161 family.

Its subcellular location is the cell inner membrane. In terms of biological role, could be involved in insertion of integral membrane proteins into the membrane. This Rickettsia peacockii (strain Rustic) protein is Putative membrane protein insertion efficiency factor.